The sequence spans 376 residues: Erythronate-4-phosphate dehydrogenase (376 aa).

2 residues coordinate substrate: Ser-45 and Thr-67. NAD(+)-binding positions include Asp-147, Ala-209 to Arg-211, and Asp-235. The active site involves Arg-211. The active site involves Glu-240. His-257 (proton donor) is an active-site residue. Residue Gly-260 coordinates NAD(+). A substrate-binding site is contributed by Tyr-261.

The protein belongs to the D-isomer specific 2-hydroxyacid dehydrogenase family. PdxB subfamily. Homodimer.

It is found in the cytoplasm. The enzyme catalyses 4-phospho-D-erythronate + NAD(+) = (R)-3-hydroxy-2-oxo-4-phosphooxybutanoate + NADH + H(+). It functions in the pathway cofactor biosynthesis; pyridoxine 5'-phosphate biosynthesis; pyridoxine 5'-phosphate from D-erythrose 4-phosphate: step 2/5. Its function is as follows. Catalyzes the oxidation of erythronate-4-phosphate to 3-hydroxy-2-oxo-4-phosphonooxybutanoate. This chain is Erythronate-4-phosphate dehydrogenase, found in Aeromonas hydrophila subsp. hydrophila (strain ATCC 7966 / DSM 30187 / BCRC 13018 / CCUG 14551 / JCM 1027 / KCTC 2358 / NCIMB 9240 / NCTC 8049).